We begin with the raw amino-acid sequence, 365 residues long: Validamycin A dioxygenase (365 aa).

Residues 174–284 enclose the Fe2OG dioxygenase domain; the sequence is HATWTQSVNW…LVSLVYFFDA (111 aa). Residues H203, D205, and H261 each contribute to the Fe cation site. The disordered stretch occupies residues 331–365; the sequence is GELSLSRPGSADSPGSSPADDHPSRPGRHPAQGPQ. Residues 336-348 show a composition bias toward low complexity; sequence SRPGSADSPGSSP.

It belongs to the iron/ascorbate-dependent oxidoreductase family. The cofactor is Fe(2+).

It catalyses the reaction validamycin A + 2-oxoglutarate + O2 = validamycin B + succinate + CO2 + H(+). The catalysed reaction is validoxylamine A + 2-oxoglutarate + O2 = validoxylamine B + succinate + CO2 + H(+). The protein operates within antibiotic biosynthesis. Its function is as follows. Involved in the biosynthesis of validamycin B, a component of the antifungal and antibiotic validamycin complex used as a crop protectant. Catalyzes the regioselective hydroxylation of validamycin A (4-O-beta-D-glucopyranosyl-validoxylamine A) at the C-6 position to yield validamycin B. To a lesser extent, also able to convert validoxylamine A to its hydroxylated derivative. In Streptomyces hygroscopicus subsp. limoneus, this protein is Validamycin A dioxygenase.